Reading from the N-terminus, the 446-residue chain is MPGLRHPSVLRAMTRAVADVSAARSALQVLGPRPDHELVDSSRAIVAATDAEAGGSRRVPEGDLEACRAVVRLEETHDAYEALLQEAEGRLEAVYRSAMEGKDLEEPDGRDESAAAAAGDDAAVQEEVIAVLRQAEEGKPVESVRLVDRQLRHLPEAFGRIQGLRVLDVSRNQLEVIPDAIGGLDHLEELRLASNALISLPDSIGLLLNLRILNVGSNRLRSLPDSISKCRSLIELDASYNGLAYLPTNIGYELVNLRKLWVHMNKLRSLPSSICEMRSLYLLDAHFNELCGLPSAIGKLSSLEILNLSSNFSDLKDLPASFGDLLNLRELDLSNNQIHALPDNFGRLDKLEKLNLEQNPLSMPPMEIVNKGVDAVKEYMLQRWLDILLEEERKSIAAAESPQAPTTPSAWLARSVSWVSDVSGSLVGYLSGENKTEKDAYLDQQY.

Positions 65–100 form a coiled coil; that stretch reads EACRAVVRLEETHDAYEALLQEAEGRLEAVYRSAME. The segment at 101–121 is disordered; sequence GKDLEEPDGRDESAAAAAGDD. LRR repeat units lie at residues 138–160, 161–184, 185–207, 208–230, 232–254, 255–277, 279–300, 301–324, 325–347, and 349–371; these read GKPV…AFGR, IQGL…IGGL, DHLE…IGLL, LNLR…ISKC, SLIE…GYEL, VNLR…ICEM, SLYL…IGKL, SSLE…SFGD, LLNL…NFGR, and DKLE…IVNK. Positions 372–384 match the GVYW motif; it reads GVDAVKEYMLQRW.

This sequence belongs to the SHOC2 family. Widely expressed.

In terms of biological role, leucine-rich repeat protein that likely mediates protein interactions, possibly in the context of signal transduction. This Oryza sativa subsp. japonica (Rice) protein is Plant intracellular Ras-group-related LRR protein 3 (IRL3).